A 1060-amino-acid chain; its full sequence is MELWAPQRLPQTRGKATAPSKDPDRGFRRDGHHRPVPHSWHNGERFHQWQDNRGSPQPQQEPRADHQQQPHYASRPGDWHQPVSGVDYYEGGYRNQLYSRPGYENSYQSYQSPTMREEYAYGSYYYHGHPQWLQEERVPRQRSPYIWHEDYREQKYLDEHHYENQHSPFGTNSETHFQSNSRNPCKDSPASNSGQEWPGELFPGSLLAEAQKNKPSLASESNLLQQRESGLSSSSYELSQYIRDAPERDDPPASAAWSPVQADVSSAGPKAPMKFYIPHVPVSFGPGGQLVHVGPSSPTDGQAALVELHSMEVILNDSEEQEEMRSFSGPLIREDVHKVDIMTFCQQKAAQSCKSETLGSRDSALLWQLLVLLCRQNGSMVGSDIAELLMQDCKKLEKYKRQPPVANLINLTDEDWPVLSSGTPNLLTGEIPPSVETPAQIVEKFTRLLYYGRKKEALEWAMKNHLWGHALFLSSKMDPQTYSWVMSGFTSTLALNDPLQTLFQLMSGRIPQAATCCGEKQWGDWRPHLAVILSNQAGDPELYQRAIVAIGDTLAGKGLVEAAHFCYLMAHVPFGHYTVKTDHLVLLGSSHSQEFLKFATTEAIQRTEIFEYCQMLGRPKSFIPSFQVYKLLYASRLADYGLVSQALHYCEAIGAAVLSQGESSHPVLLVELIKLAEKLKLSDPLVLERRSGDRDLEPDWLAQLRRQLEQKVAGDIGDPHPTRSDISGAGGTTTENTFYQDFSGCQGYSEAPGYRSALWLTPEQTCLLQPSPQQPFPLQPGSYPAGGGAGQTGTPRPFYSVPETHLPGTGSSVAVTEATGGTVWEEMLQTHLGPGENTVSQETSQPPDGQEVISKPQTPLAARPRSISESSASSAKEDEKESSDEADKNSPRNTAQRGKLGDGKEHTKSSGFGWFSWFRSKPTKNASPAGDEDSSDSPDSEETPRASSPHQAGLGLSLTPSPESPPLPDVSAFSRGRGGGEGRGSASSGGAAAGAGVGGLSGPESVSFELCSNPGVLLPPPALKGAVPLYNPSQVPQLPTATSLNRPNRLAQRRYPTQPC.

The tract at residues 1–86 (MELWAPQRLP…GDWHQPVSGV (86 aa)) is disordered. Residues 34-224 (RPVPHSWHNG…PSLASESNLL (191 aa)) are required for endoplasmic reticulum localization. Positions 41–50 (HNGERFHQWQ) are enriched in basic and acidic residues. Residues 51–60 (DNRGSPQPQQ) are compositionally biased toward polar residues. Phosphoserine is present on residues Ser55, Ser143, Ser167, Ser188, and Ser191. Disordered regions lie at residues 163-236 (ENQH…SSSY), 245-264 (APER…QADV), 711-733 (KVAG…GGTT), 770-796 (PSPQ…GTPR), and 834-1060 (PGEN…TQPC). Composition is skewed to polar residues over residues 165–195 (QHSP…NSGQ) and 213–222 (NKPSLASESN). Residues 223–236 (LLQQRESGLSSSSY) show a composition bias toward low complexity. Ser254 and Ser258 each carry phosphoserine. A central conserved domain (CCD); required for localization to endoplasmic reticulum exit sites region spans residues 271 to 713 (APMKFYIPHV…LRRQLEQKVA (443 aa)). A compositionally biased stretch (polar residues) spans 837–847 (NTVSQETSQPP). Phosphothreonine is present on Thr858. Phosphoserine occurs at positions 868, 871, 874, 882, and 883. Basic and acidic residues-rich tracts occupy residues 875-890 (AKED…DKNS) and 899-908 (KLGDGKEHTK). Residues 909–918 (SSGFGWFSWF) show a composition bias toward low complexity. Acidic residues predominate over residues 930 to 941 (GDEDSSDSPDSE). A compositionally biased stretch (gly residues) spans 991–1001 (AAAGAGVGGLS). Positions 1031-1046 (NPSQVPQLPTATSLNR) are enriched in polar residues.

It belongs to the SEC16 family. SEC16A and SEC16B are each present in multiple copies in a heteromeric complex. Interacts with TFG. Interacts with SEC13. In terms of tissue distribution, ubiquitous.

It is found in the endoplasmic reticulum membrane. The protein localises to the golgi apparatus membrane. Its function is as follows. Plays a role in the organization of the endoplasmic reticulum exit sites (ERES), also known as transitional endoplasmic reticulum (tER). Required for secretory cargo traffic from the endoplasmic reticulum to the Golgi apparatus. Involved in peroxisome biogenesis. Regulates the transport of peroxisomal biogenesis factors PEX3 and PEX16 from the ER to peroxisomes. The protein is Protein transport protein Sec16B (SEC16B) of Homo sapiens (Human).